The chain runs to 316 residues: Ribosomal RNA small subunit methyltransferase H (316 aa).

S-adenosyl-L-methionine-binding positions include Gly42–His44, Asp62, Phe86, Asp104, and Gln111.

It belongs to the methyltransferase superfamily. RsmH family.

The protein localises to the cytoplasm. The catalysed reaction is cytidine(1402) in 16S rRNA + S-adenosyl-L-methionine = N(4)-methylcytidine(1402) in 16S rRNA + S-adenosyl-L-homocysteine + H(+). In terms of biological role, specifically methylates the N4 position of cytidine in position 1402 (C1402) of 16S rRNA. The sequence is that of Ribosomal RNA small subunit methyltransferase H from Polynucleobacter necessarius subsp. necessarius (strain STIR1).